The chain runs to 1037 residues: PH and SEC7 domain-containing protein 3 (1037 aa).

The interval 37 to 70 (EEKTPDSSDHGGSTLLPPTVTNEFPEYGTMEEGG) is disordered. S76 is modified (phosphoserine). 5 disordered regions span residues 169–189 (TASH…GKSP), 236–255 (RVPE…HNPV), 262–284 (REQR…SMGR), 304–335 (EAES…ACGV), and 353–375 (APSE…ESGE). Residues 237–251 (VPESACPVSSSSAGS) show a composition bias toward low complexity. Basic and acidic residues predominate over residues 262 to 277 (REQRSDLGREHPRGYD). An SEC7 domain is found at 515–723 (NSVYTRGPQE…KALYNSIKNE (209 aa)). Positions 730 to 747 (DDEEKKKSPSEGTDEKAN) are enriched in basic and acidic residues. The segment at 730–762 (DDEEKKKSPSEGTDEKANGTHPKTISRIGSTTN) is disordered. Over residues 750-762 (HPKTISRIGSTTN) the composition is skewed to polar residues. S759 carries the phosphoserine modification. Positions 774-887 (AVYKSGFLAR…WINKINCVAA (114 aa)) constitute a PH domain. Residues 911–941 (ATTTKLSQEEQLKSHESKLKQITTELAEHRS) are a coiled coil. The segment at 984–1037 (LLTTDGNEPVGLKKSHSSPSLNPDASPVTAKVKRNVSERKDHRPETPGIKQKVT) is disordered. Phosphoserine is present on residues S998, S1000, S1001, S1003, and S1009. Over residues 1018-1028 (NVSERKDHRPE) the composition is skewed to basic and acidic residues.

As to expression, ubiquitously expressed, with highest levels in liver. Present in brain, with highest levels in olfactory bulb, cortex, hippocampal pyramidal cell layer and cerebellar granule cell layer (at protein level).

The protein localises to the cell membrane. The protein resides in the cell projection. Its subcellular location is the ruffle membrane. It localises to the postsynaptic density. Its function is as follows. Guanine nucleotide exchange factor for ARF6. This chain is PH and SEC7 domain-containing protein 3 (Psd3), found in Mus musculus (Mouse).